Here is a 150-residue protein sequence, read N- to C-terminus: Ventricular natriuretic peptide (150 aa).

Residues 1 to 21 form the signal peptide; the sequence is MAKSGIYLGCFILILIQNMVA. Residues 52–75 form a disordered region; that stretch reads EEPEVYPESEDMKMDAEEEDAGIS. Cys-120 and Cys-136 are joined by a disulfide.

This sequence belongs to the natriuretic peptide family. As to expression, heart ventricle, and to a lower extent in heart atrium.

It is found in the secreted. Exhibits natriuretic and vasodepressor activity. This is Ventricular natriuretic peptide (vnp) from Anguilla japonica (Japanese eel).